The primary structure comprises 524 residues: Bifunctional purine biosynthesis protein PurH (524 aa).

The 154-residue stretch at 1–154 folds into the MGS-like domain; that stretch reads MTRLALLSTS…KNHAHVTVLC (154 aa).

The protein belongs to the PurH family.

The enzyme catalyses (6R)-10-formyltetrahydrofolate + 5-amino-1-(5-phospho-beta-D-ribosyl)imidazole-4-carboxamide = 5-formamido-1-(5-phospho-D-ribosyl)imidazole-4-carboxamide + (6S)-5,6,7,8-tetrahydrofolate. The catalysed reaction is IMP + H2O = 5-formamido-1-(5-phospho-D-ribosyl)imidazole-4-carboxamide. It functions in the pathway purine metabolism; IMP biosynthesis via de novo pathway; 5-formamido-1-(5-phospho-D-ribosyl)imidazole-4-carboxamide from 5-amino-1-(5-phospho-D-ribosyl)imidazole-4-carboxamide (10-formyl THF route): step 1/1. Its pathway is purine metabolism; IMP biosynthesis via de novo pathway; IMP from 5-formamido-1-(5-phospho-D-ribosyl)imidazole-4-carboxamide: step 1/1. This chain is Bifunctional purine biosynthesis protein PurH, found in Acaryochloris marina (strain MBIC 11017).